Consider the following 177-residue polypeptide: Isopentenyl-diphosphate Delta-isomerase 2 (177 aa).

Residues His-24 and His-30 each contribute to the Mn(2+) site. A Nudix hydrolase domain is found at 28–160 (MLHRAFSIFV…PDVYTVWFKK (133 aa)). Residue Cys-65 is part of the active site. Cys-65 is a Mg(2+) binding site. His-67 contacts Mn(2+). Glu-85 contributes to the Mg(2+) binding site. Mn(2+) is bound by residues Glu-110 and Glu-112. Glu-112 is an active-site residue.

Belongs to the IPP isomerase type 1 family. In terms of assembly, homodimer. Mg(2+) serves as cofactor. Requires Mn(2+) as cofactor.

It localises to the cytoplasm. The enzyme catalyses isopentenyl diphosphate = dimethylallyl diphosphate. The protein operates within isoprenoid biosynthesis; dimethylallyl diphosphate biosynthesis; dimethylallyl diphosphate from isopentenyl diphosphate: step 1/1. Its function is as follows. Catalyzes the 1,3-allylic rearrangement of the homoallylic substrate isopentenyl (IPP) to its highly electrophilic allylic isomer, dimethylallyl diphosphate (DMAPP). This is Isopentenyl-diphosphate Delta-isomerase 2 from Photorhabdus laumondii subsp. laumondii (strain DSM 15139 / CIP 105565 / TT01) (Photorhabdus luminescens subsp. laumondii).